The primary structure comprises 147 residues: Large ribosomal subunit protein uL22 (147 aa).

A disordered region spans residues 110-147 (EEKKTVAKKAPAAKKTTTTKAPAKKTTSTKKATAKKES). Positions 117–140 (KKAPAAKKTTTTKAPAKKTTSTKK) are enriched in low complexity.

Belongs to the universal ribosomal protein uL22 family. As to quaternary structure, part of the 50S ribosomal subunit.

Its function is as follows. This protein binds specifically to 23S rRNA; its binding is stimulated by other ribosomal proteins, e.g. L4, L17, and L20. It is important during the early stages of 50S assembly. It makes multiple contacts with different domains of the 23S rRNA in the assembled 50S subunit and ribosome. The globular domain of the protein is located near the polypeptide exit tunnel on the outside of the subunit, while an extended beta-hairpin is found that lines the wall of the exit tunnel in the center of the 70S ribosome. The protein is Large ribosomal subunit protein uL22 of Campylobacter jejuni subsp. jejuni serotype O:6 (strain 81116 / NCTC 11828).